Consider the following 218-residue polypeptide: Small ribosomal subunit protein uS3c (218 aa).

Positions 47–118 constitute a KH type-2 domain; the sequence is VQKNIRISSG…KLNIAITRIT (72 aa).

Belongs to the universal ribosomal protein uS3 family. As to quaternary structure, part of the 30S ribosomal subunit.

Its subcellular location is the plastid. It localises to the chloroplast. This is Small ribosomal subunit protein uS3c (rps3) from Vitis vinifera (Grape).